Here is a 496-residue protein sequence, read N- to C-terminus: Glycerol kinase (496 aa).

Thr-12 provides a ligand contact to ADP. Residues Thr-12, Thr-13, and Ser-14 each contribute to the ATP site. Thr-12 contributes to the sn-glycerol 3-phosphate binding site. Residue Arg-16 coordinates ADP. Arg-82, Glu-83, and Tyr-134 together coordinate sn-glycerol 3-phosphate. Glycerol contacts are provided by Arg-82, Glu-83, and Tyr-134. Residue His-230 is modified to Phosphohistidine; by HPr. Asp-244 contacts sn-glycerol 3-phosphate. Glycerol-binding residues include Asp-244 and Gln-245. ADP-binding residues include Thr-266 and Gly-309. ATP contacts are provided by Thr-266, Gly-309, Gln-313, and Gly-410. ADP contacts are provided by Gly-410 and Asn-414.

Belongs to the FGGY kinase family. In terms of assembly, homotetramer and homodimer (in equilibrium). The phosphoenolpyruvate-dependent sugar phosphotransferase system (PTS), including enzyme I, and histidine-containing protein (HPr) are required for the phosphorylation, which leads to the activation of the enzyme.

The catalysed reaction is glycerol + ATP = sn-glycerol 3-phosphate + ADP + H(+). It participates in polyol metabolism; glycerol degradation via glycerol kinase pathway; sn-glycerol 3-phosphate from glycerol: step 1/1. With respect to regulation, activated by phosphorylation and inhibited by fructose 1,6-bisphosphate (FBP). Functionally, key enzyme in the regulation of glycerol uptake and metabolism. Catalyzes the phosphorylation of glycerol to yield sn-glycerol 3-phosphate. The polypeptide is Glycerol kinase (Bacillus cytotoxicus (strain DSM 22905 / CIP 110041 / 391-98 / NVH 391-98)).